The chain runs to 332 residues: tRNA uridine(34) hydroxylase (332 aa).

Positions 127 to 221 (SDPETVLIDT…YLEEVPKEKS (95 aa)) constitute a Rhodanese domain. Cys-181 functions as the Cysteine persulfide intermediate in the catalytic mechanism. A disordered region spans residues 308-332 (AKKLAQLNKQKKQQAKEAARKKAQQ). Basic and acidic residues predominate over residues 321–332 (QAKEAARKKAQQ).

Belongs to the TrhO family.

The enzyme catalyses uridine(34) in tRNA + AH2 + O2 = 5-hydroxyuridine(34) in tRNA + A + H2O. Catalyzes oxygen-dependent 5-hydroxyuridine (ho5U) modification at position 34 in tRNAs. In Francisella tularensis subsp. tularensis (strain FSC 198), this protein is tRNA uridine(34) hydroxylase.